Reading from the N-terminus, the 89-residue chain is Submaxillary mucin (89 aa).

Residues 1 to 89 form a disordered region; that stretch reads AGSVGRTAGG…VGGSPVATTL (89 aa). O-linked (GalNAc...) serine; partial glycosylation occurs at Ser3. Residues Thr7 and Thr14 are each glycosylated (O-linked (GalNAc...) threonine; partial). An O-linked (GalNAc...) serine; partial glycan is attached at Ser15. Residue Thr23 is glycosylated (O-linked (GalNAc...) threonine; partial). Ser25 carries an O-linked (GalNAc...) serine; partial glycan. O-linked (GalNAc...) threonine; partial glycosylation is present at Thr27. The O-linked (GalNAc...) serine; partial glycan is linked to Ser29. Thr34 carries O-linked (GalNAc...) threonine; partial glycosylation. Ser38 is a glycosylation site (O-linked (GalNAc...) serine; partial). Residue Thr42 is glycosylated (O-linked (GalNAc...) threonine; partial). O-linked (GalNAc...) serine; partial glycans are attached at residues Ser47 and Ser49. Thr50 carries O-linked (GalNAc...) threonine; partial glycosylation. An O-linked (GalNAc...) serine; partial glycan is attached at Ser54. Low complexity predominate over residues 56-71; sequence APGTTLAGRAGTTLGP. Thr59, Thr60, Thr67, and Thr68 each carry an O-linked (GalNAc...) threonine; partial glycan. Residues Ser73 and Ser76 are each glycosylated (O-linked (GalNAc...) serine; partial). An O-linked (GalNAc...) threonine; partial glycan is attached at Thr78. Ser83 is a glycosylation site (O-linked (GalNAc...) serine; partial).

Heavily O-glycosylated at most but not all Ser and Thr residues. In terms of tissue distribution, expressed in the submaxillary salivary gland.

Its subcellular location is the secreted. The chain is Submaxillary mucin from Canis lupus familiaris (Dog).